The chain runs to 726 residues: Sister chromatid cohesion protein SCC4 (726 aa).

TPR repeat units follow at residues 7-40 (AEGL…QISF), 88-121 (FQNY…ASSV), 132-165 (CNFN…ASHI), 229-262 (RLRL…IQQL), 443-477 (PTIL…CIEA), 531-564 (ASIL…AHNH), and 572-605 (AQYL…AKKL). Positions 697–726 (SVGIEGPSPAPSSSRLVGLDTGKRWGKRRM) are disordered.

Belongs to the SCC4/mau-2 family. As to quaternary structure, interacts with SCC2 to form the cohesin loading complex. Expressed ubiquitously.

Its subcellular location is the nucleus. The protein localises to the cytoplasm. Its function is as follows. Essential protein required for cell fate determination during embryogenesis. Involved in sister chromatid cohesion. Forms a complex with SCC2, which is required for the association of the cohesin complex with chromosomes. The sequence is that of Sister chromatid cohesion protein SCC4 from Arabidopsis thaliana (Mouse-ear cress).